We begin with the raw amino-acid sequence, 690 residues long: Eukaryotic translation initiation factor 3 subunit B (690 aa).

The disordered stretch occupies residues 1-37; it reads MAKKKSEEQSSADANDSDYQEEPNFEDPPGFVDNISD. Acidic residues predominate over residues 15–25; that stretch reads NDSDYQEEPNF. The region spanning 57-141 is the RRM domain; sequence SVVVVDNIPK…HTFAVNLFTD (85 aa). WD repeat units lie at residues 207–246, 293–331, 334–369, 442–484, and 530–575; these read TRER…KIQK, DGMS…LLDL, IKIP…TLME, EIRE…KPSL, and PDHF…IKRT. The stretch at 595–645 forms a coiled coil; the sequence is EEKQKEIKKNLKKYYAAFEQKDRLRLTRASKELLEKRSQLRETFMEYRNKR.

This sequence belongs to the eIF-3 subunit B family. Component of the eukaryotic translation initiation factor 3 (eIF-3) complex. The eIF-3 complex interacts with pix. Interacts with mxt.

The protein resides in the cytoplasm. Its function is as follows. RNA-binding component of the eukaryotic translation initiation factor 3 (eIF-3) complex, which is involved in protein synthesis of a specialized repertoire of mRNAs and, together with other initiation factors, stimulates binding of mRNA and methionyl-tRNAi to the 40S ribosome. The eIF-3 complex specifically targets and initiates translation of a subset of mRNAs involved in cell proliferation. This chain is Eukaryotic translation initiation factor 3 subunit B, found in Drosophila sechellia (Fruit fly).